The chain runs to 89 residues: Small ribosomal subunit protein uS15 (89 aa).

This sequence belongs to the universal ribosomal protein uS15 family. As to quaternary structure, part of the 30S ribosomal subunit. Forms a bridge to the 50S subunit in the 70S ribosome, contacting the 23S rRNA.

Its function is as follows. One of the primary rRNA binding proteins, it binds directly to 16S rRNA where it helps nucleate assembly of the platform of the 30S subunit by binding and bridging several RNA helices of the 16S rRNA. Forms an intersubunit bridge (bridge B4) with the 23S rRNA of the 50S subunit in the ribosome. This chain is Small ribosomal subunit protein uS15, found in Chlamydia abortus (strain DSM 27085 / S26/3) (Chlamydophila abortus).